Reading from the N-terminus, the 270-residue chain is Protein tonB2 (270 aa).

The Cytoplasmic segment spans residues Met1–Thr51. Residues Ile52–Leu69 traverse the membrane as a helical segment. At Ser70 to Asn270 the chain is on the periplasmic side. Residues Val80–Tyr187 are disordered. Positions Pro94–Val118 are enriched in pro residues. Over residues Pro133–Pro143 the composition is skewed to basic residues. Positions Arg144–Pro180 are enriched in pro residues. Residues Pro180–Asn270 enclose the TonB C-terminal domain.

Belongs to the TonB family. Homodimer. Forms a complex with the accessory proteins ExbB and ExbD.

It is found in the cell inner membrane. Interacts with outer membrane receptor proteins that carry out high-affinity binding and energy dependent uptake into the periplasmic space of specific substrates. It could act to transduce energy from the cytoplasmic membrane to specific energy-requiring processes in the outer membrane, resulting in the release into the periplasm of ligands bound by these outer membrane proteins. This chain is Protein tonB2 (tonB2), found in Pseudomonas aeruginosa (strain ATCC 15692 / DSM 22644 / CIP 104116 / JCM 14847 / LMG 12228 / 1C / PRS 101 / PAO1).